Reading from the N-terminus, the 725-residue chain is mRNA decay activator protein ZFP36L3 (725 aa).

Positions 1 to 25 are enriched in low complexity; sequence MANNNLNRPLNTNVADSSNSSSTPG. Positions 1 to 119 are disordered; that stretch reads MANNNLNRPL…KVSGSSSLAT (119 aa). 2 stretches are compositionally biased toward polar residues: residues 42–72 and 100–119; these read APSS…QSGA and HSLQ…SLAT. 2 C3H1-type zinc fingers span residues 122-150 and 160-188; these read RYKT…HGYR and KYKT…HNQP. The segment at 193–711 is necessary for cytoplasmic localization; that stretch reads VLSESTLEEP…ESEFDNTNSS (519 aa). The disordered stretch occupies residues 276–310; sequence STTAHDADKDPDKDADKDPSNNSANDALAFPQEPG. A compositionally biased stretch (basic and acidic residues) spans 280–294; that stretch reads HDADKDPDKDADKDP. 4 consecutive transmembrane segments (helical) span residues 380 to 400, 420 to 440, 441 to 461, and 468 to 488; these read LAPA…AMAL, AALA…GAAM, APGA…MATG, and AAMA…GAAV. Residues 686-709 form a disordered region; the sequence is DEDDFLRRSSSSSSLNESEFDNTN. Residues 693–702 show a composition bias toward low complexity; that stretch reads RSSSSSSLNE.

Expressed in placenta and extraembryonic tissues (at protein level). Not detected in embryos and fetus.

Its subcellular location is the cytoplasm. The protein resides in the membrane. Functionally, placenta-specific zinc-finger RNA-binding protein that destabilizes cytoplasmic AU-rich element (ARE)-containing mRNA transcripts by promoting their poly(A) tail removal or deadenylation, and hence provide a mechanism for attenuating protein synthesis. Binds to the 3'-UTR ARE of placental target mRNAs, such as TNF, HBEGF and LIPG. Involved in placental expression of many genes important for normal placental physiology. In Mus musculus (Mouse), this protein is mRNA decay activator protein ZFP36L3.